Reading from the N-terminus, the 694-residue chain is Polyphosphate kinase (694 aa).

Asparagine 45 lines the ATP pocket. The Mg(2+) site is built by arginine 367 and arginine 397. Histidine 427 acts as the Phosphohistidine intermediate in catalysis. ATP contacts are provided by tyrosine 460, arginine 553, and histidine 580.

It belongs to the polyphosphate kinase 1 (PPK1) family. Mg(2+) is required as a cofactor. Post-translationally, an intermediate of this reaction is the autophosphorylated ppk in which a phosphate is covalently linked to a histidine residue through a N-P bond.

The enzyme catalyses [phosphate](n) + ATP = [phosphate](n+1) + ADP. In terms of biological role, catalyzes the reversible transfer of the terminal phosphate of ATP to form a long-chain polyphosphate (polyP). The protein is Polyphosphate kinase of Campylobacter coli.